The chain runs to 101 residues: Large ribosomal subunit protein uL23 (101 aa).

Belongs to the universal ribosomal protein uL23 family. As to quaternary structure, part of the 50S ribosomal subunit. Contacts protein L29, and trigger factor when it is bound to the ribosome.

One of the early assembly proteins it binds 23S rRNA. One of the proteins that surrounds the polypeptide exit tunnel on the outside of the ribosome. Forms the main docking site for trigger factor binding to the ribosome. The sequence is that of Large ribosomal subunit protein uL23 from Leptospira biflexa serovar Patoc (strain Patoc 1 / Ames).